Reading from the N-terminus, the 257-residue chain is Golgi SNAP receptor complex member 1-2 (257 aa).

Residues 1–235 are Cytoplasmic-facing; it reads MTESSLDLQE…GSIKRKRSRD (235 aa). Asparagine 51 carries the phosphoserine modification. Positions 113–147 form a coiled coil; the sequence is TQKLARHRDILHEYTQEFRRIKGNINSLREHAELL. The chain crosses the membrane as a helical; Anchor for type IV membrane protein span at residues 236 to 256; it reads TLILSAVIAACTLFLIIYWLS. Position 257 (lysine 257) is a topological domain, vesicular.

The protein belongs to the GOSR1 family. Component of several multiprotein Golgi SNARE complexes.

Its subcellular location is the golgi apparatus membrane. It is found in the endoplasmic reticulum membrane. Its function is as follows. Involved in transport from the ER to the Golgi apparatus as well as in intra-Golgi transport. It belongs to a super-family of proteins called t-SNAREs or soluble NSF (N-ethylmaleimide-sensitive factor) attachment protein receptor. In Arabidopsis thaliana (Mouse-ear cress), this protein is Golgi SNAP receptor complex member 1-2 (GOS12).